A 1655-amino-acid chain; its full sequence is Protein scribble homolog (1655 aa).

The sufficient for targeting to adherens junction and to inhibit cell proliferation stretch occupies residues 1–818 (MLKCIPLWRC…MRVWRERMVE (818 aa)). S37 bears the Phosphoserine mark. LRR repeat units follow at residues 37–58 (SLEELLLDANQLRELPKPFFRL), 60–81 (NLRKLGLSDNEIQRLPPEVANF), 83–104 (QLVELDVSRNDIPEIPESIKFC), 106–127 (ALEIADFSGNPLSRLPDGFTQL), 129–150 (SLAHLALNDVSLQALPGDVGNL), 152–174 (NLVTLELRENLLKSLPASLSFLV), 175–197 (KLEQLDLGGNDLEVLPDTLGALP), 198–219 (NLRELWLDRNQLSALPPELGNL), 221–243 (RLVCLDVSENRLEELPAELGGLV), 244–265 (LLTDLLLSQNLLRRLPDGIGQL), 267–288 (QLSILKVDQNRLCEVTEAIGDC), 290–312 (NLSELILTENLLMALPRSLGKLT), 313–334 (KLTNLNVDRNHLEALPPEIGGC), 336–357 (ALSVLSLRDNRLAVLPPELAHT), 359–381 (ELHVLDVAGNRLQSLPFALTHLN), and 382–402 (LKALWLAENQAQPMLRFQTED). A Phosphothreonine modification is found at T378. Disordered stretches follow at residues 417-440 (PQQPPPSLEDAGQQGSLSETWSDA), 459-606 (DAEE…IRKD), and 628-702 (LLQG…VSAP). Positions 458–474 (EDAEEAAAEKRGLQRRA) form a coiled coil. T475 is modified (phosphothreonine). The span at 479 to 494 (SELKVMKRSIEGRRSE) shows a compositional bias: basic and acidic residues. S504 carries the post-translational modification Phosphoserine. Positions 537 to 555 (EGPSAEAQGGSQQEATTAG) are enriched in low complexity. Acidic residues-rich tracts occupy residues 556–565 (GEEDAEEDYQ) and 660–694 (EEEEEEEGSPQEEEEEEEEENRAEEEEASTEEEDK). Residues 656 to 701 (RAQKEEEEEEEGSPQEEEEEEEEENRAEEEEASTEEEDKEGAVVSA) are a coiled coil. S688 carries the phosphoserine modification. At T689 the chain carries Phosphothreonine. A phosphoserine mark is found at S708 and S764. The interval 717 to 1229 (IEPARIEEEE…SLESISSIDR (513 aa)) is interaction with ARHGEF7. Residues 728–815 (TLTILRQTGG…AVQMRVWRER (88 aa)) enclose the PDZ 1 domain. The required for interaction with VIM stretch occupies residues 728–1194 (TLTILRQTGG…TVLVCDGFEA (467 aa)). Phosphothreonine is present on T826. The interval 827–853 (PLRPEDDYSPRERRGGGLRLPLLPPES) is disordered. A compositionally biased stretch (basic and acidic residues) spans 829 to 841 (RPEDDYSPRERRG). Phosphoserine is present on residues S835, S853, S875, and S939. 3 PDZ domains span residues 862–950 (VACL…EREA), 1004–1093 (EIRL…RRDP), and 1100–1194 (ELCI…GFEA). The tract at residues 1105-1117 (KAPGERLGISIRG) is interaction with tick-borne encephalitis virus RNA-directed RNA polymerase NS5. Phosphoserine occurs at positions 1140, 1220, 1223, 1226, 1232, 1276, 1279, 1295, 1298, 1306, and 1309. Positions 1227 to 1242 (IDRELSPEGPGKEKEL) are enriched in basic and acidic residues. The interval 1227–1246 (IDRELSPEGPGKEKELPGQT) is disordered. The interval 1277–1489 (AGSVQRVPSG…APERALSPAE (213 aa)) is disordered. Positions 1302-1311 (QQPPSPPSPD) are enriched in pro residues. At T1342 the chain carries Phosphothreonine. S1348 is subject to Phosphoserine. A compositionally biased stretch (basic and acidic residues) spans 1353 to 1365 (SFRERQKYFELEV). Position 1378 is a phosphoserine (S1378). Residues 1379-1419 (LVGADDLRKMQEEEARKLQQKRAQMLREAAEAGAEARLALD) adopt a coiled-coil conformation. The span at 1383-1395 (DDLRKMQEEEARK) shows a compositional bias: basic and acidic residues. The span at 1409-1421 (EAGAEARLALDGE) shows a compositional bias: low complexity. Acidic residues predominate over residues 1422 to 1432 (TLGEEEQEDEQ). Phosphoserine occurs at positions 1437, 1445, and 1448. The span at 1461 to 1472 (AKAERRHQERLR) shows a compositional bias: basic and acidic residues. 3 positions are modified to phosphoserine: S1475, S1486, and S1508. The interval 1520–1568 (LSRSQEGRGTRGPLERLAEAPSPAPTPSPTPVEDLGPQTSTSPGRLPLS) is disordered. Basic and acidic residues predominate over residues 1524–1537 (QEGRGTRGPLERLA). S1541 is subject to Phosphoserine. Phosphothreonine is present on T1545. S1547, S1561, and S1591 each carry phosphoserine. The tract at residues 1622–1655 (GRPSPGAVGPEDVALCSSRRPVRPGRRGLGPVPS) is disordered.

The protein belongs to the LAP (LRR and PDZ) protein family. Interacts with UBE3A. Interacts with PAK1 and PAK2. Interacts (via PDZ domains) with VANGL2. Interacts (via PDZ domains) with LPP and TRIP6; the interaction is direct. Interacts (via PDZ domains) with TJP2. Interacts (via PDZ domains) with APC; may mediate APC targeting to adherens junctions of epithelial cells. Interacts (via PDZ domains) with TSHR; regulates TSHR trafficking and function. Interacts with ARHGEF7 and GIT1; interacts directly with ARHGEF7. Interacts with CTNNB1. Interacts with MAPK12. Interacts (via PDZ domains 1 and 3) with MCC. Interacts with DLG5. Interacts with STK4/MST1 and LATS1 in the presence of DLG5. Interacts (via PDZ domain 3) with CRTAM (via PDZ-binding motif); the interaction promotes CRTAM and SCRIB polarization in a subset of CD4+ T-cells. Interacts with YES1, when YES1 is in a closed conformation; the interaction facilitates YES1 autophosphorylation. Interacts (via PDZ domains) with VIM; the interaction protects SCRIB from proteasomal degradation and facilitates SCRIB localization to intermediate filaments, the interaction is reduced by cell contact inhibition. As to quaternary structure, (Microbial infection) Interacts (via fourth PDZ domain) with tick-borne encephalitis virus RNA-directed RNA polymerase NS5; this interaction targets viral NS5 to the cell membrane periphery and nucleus and prevents STAT1 phosphorylation, and thus, the activation of the JAK-STAT signaling pathway. Interacts with HPV E6. Interacts with influenza A virus protein NS1; the interaction results in the translocation of SCRIB from the cell membrane to perinuclear puncta. Ubiquitinated; targeted for UBE3A-dependent multiubiquitination in the presence of high-risk HPV E6 proteins and degraded. Post-translationally, palmitoylated. Could be depalmitoylated by LYPLA1 and/or LYPLA2. Palmitoylation of SCRIB by ZDHHC7 is required for its localization to cell-cell junctions, function in the establishement of epithelial cell polarity and the regulation of downstream signaling pathways important for epithelial cell differentiation. In terms of tissue distribution, expressed in kidney, skeletal muscles, liver, lung, breast, intestine, placenta and skin mainly in epithelial cells (at protein level).

It is found in the cell membrane. The protein localises to the cell junction. The protein resides in the adherens junction. It localises to the cell projection. Its subcellular location is the lamellipodium. It is found in the cytoplasm. The protein localises to the postsynapse. The protein resides in the presynapse. Its function is as follows. Scaffold protein involved in different aspects of polarized cell differentiation regulating epithelial and neuronal morphogenesis and T-cell polarization. Via its interaction with CRTAM, required for the late phase polarization of a subset of CD4+ T-cells, which in turn regulates TCR-mediated proliferation and IFNG and IL22 production. Plays a role in cell directional movement, cell orientation, cell sheet organization and Golgi complex polarization at the cell migration front. Promotes epithelial cell layer barrier function via maintaining cell-cell adhesion. Most probably functions in the establishment of apico-basal cell polarity. May function in cell proliferation regulating progression from G1 to S phase and as a positive regulator of apoptosis for instance during acinar morphogenesis of the mammary epithelium. May regulate cell invasion via MAPK-mediated cell migration and adhesion. May play a role in exocytosis and in the targeting of synaptic vesicles to synapses. Functions as an activator of Rac GTPase activity. This is Protein scribble homolog from Homo sapiens (Human).